The sequence spans 281 residues: MIKFKLILIFFLFIVSTTYASVARPFDFRKWNFKKDIDLAYVLMHDLDNGILIKSQDKAGSIKSQEVLTKLNALNAYCNNLQRIIKAKLVRGRFQKEVELPLLKIIRKYKYLTRNYKNKSLIENPEYTKLIAERIIKKALFLENYFQSNRLKNVKSGENIKKRISDNQSKLKSLRSKPNKSVGSKFSKNSRPSKSPQGVKKCNKRRILDKYDLNGAESEFLDDPSQESDELEREYQDDELESEDPDDGEREYQDDRESRDDTFNEDQSEDEFFDSLEDQFI.

The tract at residues 162–281 (KRISDNQSKL…FFDSLEDQFI (120 aa)) is disordered. The span at 179–196 (NKSVGSKFSKNSRPSKSP) shows a compositional bias: polar residues. Positions 219–249 (EFLDDPSQESDELEREYQDDELESEDPDDGE) are enriched in acidic residues. Residues 250–262 (REYQDDRESRDDT) show a composition bias toward basic and acidic residues. Acidic residues predominate over residues 263–281 (FNEDQSEDEFFDSLEDQFI).

The protein resides in the cell outer membrane. In Borreliella burgdorferi (strain ATCC 35210 / DSM 4680 / CIP 102532 / B31) (Borrelia burgdorferi), this protein is Putative outer membrane protein BBA52.